Here is a 326-residue protein sequence, read N- to C-terminus: MRPELALVPGEPAGIGPELCVRLVQQPREDCRLLAFADPDTLRAAAAALNLPLQLLPEGAEARVPGDLRLRVVANATPSRFGQADPANAGAVIGALLGAGQACLSGELHGVVTGPVHKAVINEGGIAYSGTTELLADQAGVKVVMMLANHIVRVALATTHLPLREVADAITAPSLEHTLRTVHAALRREFGLPAPRIAVLGLNPHAGEDGHLGREELDLVIPLLQRLRAEGMDLIGPLPADTAFLPAKLAGFDTVLAMYHDQGLPVLKYSGFEQAVNLTLGLPYPRVAVDHGTALDLAGRGVADPSSLQAATTLCAQLARQRTLSA.

T132 provides a ligand contact to substrate. 3 residues coordinate a divalent metal cation: H160, H205, and H260. Positions 268, 277, and 286 each coordinate substrate.

Belongs to the PdxA family. As to quaternary structure, homodimer. The cofactor is Zn(2+). Mg(2+) is required as a cofactor. Co(2+) serves as cofactor.

The protein localises to the cytoplasm. It carries out the reaction 4-(phosphooxy)-L-threonine + NAD(+) = 3-amino-2-oxopropyl phosphate + CO2 + NADH. Its pathway is cofactor biosynthesis; pyridoxine 5'-phosphate biosynthesis; pyridoxine 5'-phosphate from D-erythrose 4-phosphate: step 4/5. In terms of biological role, catalyzes the NAD(P)-dependent oxidation of 4-(phosphooxy)-L-threonine (HTP) into 2-amino-3-oxo-4-(phosphooxy)butyric acid which spontaneously decarboxylates to form 3-amino-2-oxopropyl phosphate (AHAP). This chain is 4-hydroxythreonine-4-phosphate dehydrogenase, found in Stenotrophomonas maltophilia (strain K279a).